The following is a 156-amino-acid chain: Arginine repressor (156 aa).

The protein belongs to the ArgR family.

The protein localises to the cytoplasm. It participates in amino-acid biosynthesis; L-arginine biosynthesis [regulation]. In terms of biological role, regulates arginine biosynthesis genes. The protein is Arginine repressor of Shigella boydii serotype 18 (strain CDC 3083-94 / BS512).